Consider the following 455-residue polypeptide: tRNA modification GTPase MnmE (455 aa).

(6S)-5-formyl-5,6,7,8-tetrahydrofolate is bound by residues Arg24, Glu81, and Lys121. The 162-residue stretch at 217 to 378 (GMKVVIAGRP…LREHLKDCMG (162 aa)) folds into the TrmE-type G domain. Position 227 (Asn227) interacts with K(+). Residues 227-232 (NAGKSS), 246-252 (TDIAGTT), 271-274 (DTAG), and 359-361 (SAR) contribute to the GTP site. Residue Ser231 participates in Mg(2+) binding. The K(+) site is built by Thr246, Ile248, and Thr251. Thr252 provides a ligand contact to Mg(2+). Lys455 serves as a coordination point for (6S)-5-formyl-5,6,7,8-tetrahydrofolate.

Belongs to the TRAFAC class TrmE-Era-EngA-EngB-Septin-like GTPase superfamily. TrmE GTPase family. As to quaternary structure, homodimer. Heterotetramer of two MnmE and two MnmG subunits. K(+) serves as cofactor.

Its subcellular location is the cytoplasm. Its function is as follows. Exhibits a very high intrinsic GTPase hydrolysis rate. Involved in the addition of a carboxymethylaminomethyl (cmnm) group at the wobble position (U34) of certain tRNAs, forming tRNA-cmnm(5)s(2)U34. This Photobacterium profundum (strain SS9) protein is tRNA modification GTPase MnmE.